The following is a 265-amino-acid chain: Energy-coupling factor transporter transmembrane protein EcfT (265 aa).

Helical transmembrane passes span Val29 to Phe49, Phe63 to Leu83, Leu94 to Phe114, Phe117 to Thr137, Ile143 to Ile163, and Arg243 to Leu263.

Belongs to the energy-coupling factor EcfT family. Forms a stable energy-coupling factor (ECF) transporter complex composed of 2 membrane-embedded substrate-binding proteins (S component), 2 ATP-binding proteins (A component) and 2 transmembrane proteins (T component). May be able to interact with more than 1 S component at a time.

The protein resides in the cell membrane. Transmembrane (T) component of an energy-coupling factor (ECF) ABC-transporter complex. Unlike classic ABC transporters this ECF transporter provides the energy necessary to transport a number of different substrates. This is Energy-coupling factor transporter transmembrane protein EcfT from Listeria innocua serovar 6a (strain ATCC BAA-680 / CLIP 11262).